We begin with the raw amino-acid sequence, 56 residues long: Large ribosomal subunit protein bL33c (56 aa).

This sequence belongs to the bacterial ribosomal protein bL33 family.

It is found in the plastid. It localises to the chloroplast. The polypeptide is Large ribosomal subunit protein bL33c (rpl33) (Guillardia theta (Cryptophyte)).